A 96-amino-acid polypeptide reads, in one-letter code: Large ribosomal subunit protein eL14 (96 aa).

The protein belongs to the eukaryotic ribosomal protein eL14 family.

The sequence is that of Large ribosomal subunit protein eL14 from Saccharolobus solfataricus (strain ATCC 35092 / DSM 1617 / JCM 11322 / P2) (Sulfolobus solfataricus).